Consider the following 734-residue polypeptide: Polyribonucleotide nucleotidyltransferase (734 aa).

Residues D503 and D509 each coordinate Mg(2+). The KH domain maps to 570-629 (PKLSTIQVPVDAIGMIIGKGGETIRSITEETGAQINVDDDGTVTISSPNGESAAAAIETI). The region spanning 639 to 713 (GTIYMGKVKD…GKIRYALSIK (75 aa)) is the S1 motif domain.

This sequence belongs to the polyribonucleotide nucleotidyltransferase family. Mg(2+) serves as cofactor.

Its subcellular location is the cytoplasm. The enzyme catalyses RNA(n+1) + phosphate = RNA(n) + a ribonucleoside 5'-diphosphate. In terms of biological role, involved in mRNA degradation. Catalyzes the phosphorolysis of single-stranded polyribonucleotides processively in the 3'- to 5'-direction. The chain is Polyribonucleotide nucleotidyltransferase from Chlorobium phaeobacteroides (strain BS1).